Reading from the N-terminus, the 273-residue chain is 2,3,4,5-tetrahydropyridine-2,6-dicarboxylate N-succinyltransferase (273 aa).

Substrate-binding residues include Arg104 and Asp141.

Belongs to the transferase hexapeptide repeat family. In terms of assembly, homotrimer.

It localises to the cytoplasm. It catalyses the reaction (S)-2,3,4,5-tetrahydrodipicolinate + succinyl-CoA + H2O = (S)-2-succinylamino-6-oxoheptanedioate + CoA. It functions in the pathway amino-acid biosynthesis; L-lysine biosynthesis via DAP pathway; LL-2,6-diaminopimelate from (S)-tetrahydrodipicolinate (succinylase route): step 1/3. This is 2,3,4,5-tetrahydropyridine-2,6-dicarboxylate N-succinyltransferase from Neisseria gonorrhoeae (strain ATCC 700825 / FA 1090).